The primary structure comprises 1622 residues: ABC transporter C family member 1 (1622 aa).

A run of 9 helical transmembrane segments spans residues 37–57 (FVLG…LWLI), 73–93 (FSYF…FRLV), 110–130 (EAFM…MTVV), 145–165 (FAVI…LSVK), 174–194 (YLYI…FVYF), 336–356 (AWIG…GVLC), 440–460 (VASI…TVII), 527–547 (FILN…FSLL), and 557–577 (FTSL…PNII). In terms of domain architecture, ABC transmembrane type-1 1 spans 302-582 (FWWGGFWKIG…LPNIITQMVN (281 aa)). An ABC transporter 1 domain is found at 614 to 838 (ISIRNGYFSW…GPLFQRLMEN (225 aa)). 649–656 (GSTGEGKT) is an ATP binding site. Positions 852 to 876 (AEVDQTSVKPVENGNANNLQKDGIE) are disordered. Residues 855–871 (DQTSVKPVENGNANNLQ) show a composition bias toward polar residues. Helical transmembrane passes span 909 to 929 (ALGG…TQVF), 951 to 971 (PLFY…VTLI), 1027 to 1049 (AVFV…LIGI), 1053 to 1072 (LSLW…YLYY), 1138 to 1158 (LGIR…SLAV), and 1172 to 1192 (STMG…TAVL). Positions 916 to 1200 (VMMLVICYVL…VLRLASLAEN (285 aa)) constitute an ABC transmembrane type-1 2 domain. Positions 1231-1246 (WPSSGSIKFEDVVLRY) are interaction with calmodulin and FKP42/TWD1. Positions 1237–1471 (IKFEDVVLRY…GESSFSKMVQ (235 aa)) constitute an ABC transporter 2 domain. Residue 1271–1278 (GRTGAGKS) participates in ATP binding.

It belongs to the ABC transporter superfamily. ABCC family. Conjugate transporter (TC 3.A.1.208) subfamily. As to quaternary structure, interacts with calmodulin (CaM), PAS1 and FKBP42/TWD1. As to expression, ubiquitous, with higher levels in leaves and stems and lower levels in roots. Localized in the root apex, root hair tips and root epidermis.

It localises to the vacuole membrane. It catalyses the reaction ATP + H2O + xenobioticSide 1 = ADP + phosphate + xenobioticSide 2.. In terms of biological role, pump for glutathione S-conjugates. Mediates the transport of S-(2,4-dinitrophenyl)-glutathione (DNP-GS), GSSG, cyanidin 3-glucoside-GS (C3G-GS) and metolachlor-GS (MOC-GS). The polypeptide is ABC transporter C family member 1 (ABCC1) (Arabidopsis thaliana (Mouse-ear cress)).